The chain runs to 171 residues: Small ribosomal subunit protein bS16 (171 aa).

The interval 114 to 171 (EGGPTTEAAKPKKKAATSGAKKAAKAAEPEAAASEAAEPEAAAAPAEGGEQAESSAES) is disordered. Low complexity predominate over residues 142 to 171 (PEAAASEAAEPEAAAAPAEGGEQAESSAES).

It belongs to the bacterial ribosomal protein bS16 family.

In Mycolicibacterium paratuberculosis (strain ATCC BAA-968 / K-10) (Mycobacterium paratuberculosis), this protein is Small ribosomal subunit protein bS16.